A 156-amino-acid chain; its full sequence is Ribosomal RNA large subunit methyltransferase H (156 aa).

S-adenosyl-L-methionine-binding positions include L73, G104, and 123–128 (LSPLTL).

This sequence belongs to the RNA methyltransferase RlmH family. As to quaternary structure, homodimer.

It localises to the cytoplasm. The enzyme catalyses pseudouridine(1915) in 23S rRNA + S-adenosyl-L-methionine = N(3)-methylpseudouridine(1915) in 23S rRNA + S-adenosyl-L-homocysteine + H(+). Functionally, specifically methylates the pseudouridine at position 1915 (m3Psi1915) in 23S rRNA. This chain is Ribosomal RNA large subunit methyltransferase H, found in Pectobacterium atrosepticum (strain SCRI 1043 / ATCC BAA-672) (Erwinia carotovora subsp. atroseptica).